The following is a 146-amino-acid chain: Hemoglobin subunit beta (146 aa).

In terms of domain architecture, Globin spans 2 to 146 (FLTAEEKGLV…VASALAHRYH (145 aa)). S44 carries the phosphoserine modification. K59 carries the post-translational modification N6-acetyllysine. H63 lines the heme b pocket. At K82 the chain carries N6-acetyllysine. Residue H92 coordinates heme b. The residue at position 93 (C93) is an S-nitrosocysteine.

The protein belongs to the globin family. Heterotetramer of two alpha chains and two beta chains. Red blood cells.

Functionally, involved in oxygen transport from the lung to the various peripheral tissues. This chain is Hemoglobin subunit beta (HBB), found in Paguma larvata (Masked palm civet).